A 241-amino-acid polypeptide reads, in one-letter code: Nopaline transport system permease protein NocM (241 aa).

An ABC transmembrane type-1 domain is found at 17–215 (VPTTLTLAFI…FITFVVSRLV (199 aa)). 5 helical membrane passes run 21–41 (LTLAFISLLIGFVVSVPVALM), 52–72 (LAYGYVYIIRSTPLLVQMFLI), 95–115 (PWFCAILALALNTAAYTSEII), 161–181 (VMLIIKSTSLASTITIVEVTG), and 191–211 (YSPVEVFIVAGAIYLFITFVV).

The protein belongs to the binding-protein-dependent transport system permease family. HisMQ subfamily.

Its subcellular location is the cell inner membrane. Its function is as follows. Component of the nopaline active transport system probably consisting of four subunits: Q, M, P and T. This system is also capable of transporting octopine provided that catabolic functions are induced with nopaline. The polypeptide is Nopaline transport system permease protein NocM (nocM) (Agrobacterium fabrum (strain C58 / ATCC 33970) (Agrobacterium tumefaciens (strain C58))).